A 1207-amino-acid polypeptide reads, in one-letter code: DNA-directed RNA polymerase subunit beta' (1207 aa).

Residues C60, C62, C75, and C78 each coordinate Zn(2+). 3 residues coordinate Mg(2+): D449, D451, and D453. Positions 822, 896, 903, and 906 each coordinate Zn(2+).

The protein belongs to the RNA polymerase beta' chain family. In terms of assembly, the RNAP catalytic core consists of 2 alpha, 1 beta, 1 beta' and 1 omega subunit. When a sigma factor is associated with the core the holoenzyme is formed, which can initiate transcription. It depends on Mg(2+) as a cofactor. Zn(2+) is required as a cofactor.

The enzyme catalyses RNA(n) + a ribonucleoside 5'-triphosphate = RNA(n+1) + diphosphate. DNA-dependent RNA polymerase catalyzes the transcription of DNA into RNA using the four ribonucleoside triphosphates as substrates. The protein is DNA-directed RNA polymerase subunit beta' of Staphylococcus saprophyticus subsp. saprophyticus (strain ATCC 15305 / DSM 20229 / NCIMB 8711 / NCTC 7292 / S-41).